Reading from the N-terminus, the 230-residue chain is Small ribosomal subunit protein uS3 (230 aa).

The KH type-2 domain maps to 39–107 (VRKYLADKLQ…PAQINIAEIR (69 aa)).

This sequence belongs to the universal ribosomal protein uS3 family. Part of the 30S ribosomal subunit. Forms a tight complex with proteins S10 and S14.

Binds the lower part of the 30S subunit head. Binds mRNA in the 70S ribosome, positioning it for translation. In Shewanella oneidensis (strain ATCC 700550 / JCM 31522 / CIP 106686 / LMG 19005 / NCIMB 14063 / MR-1), this protein is Small ribosomal subunit protein uS3.